Reading from the N-terminus, the 340-residue chain is DNA-directed RNA polymerase subunit alpha (340 aa).

Residues 1–236 are alpha N-terminal domain (alpha-NTD); the sequence is MLSLSKNWNT…EQLQLFIAFE (236 aa). Residues 251–340 form an alpha C-terminal domain (alpha-CTD) region; that stretch reads FSPYLLKRVD…LSKRYEDSYN (90 aa).

Belongs to the RNA polymerase alpha chain family. Homodimer. The RNAP catalytic core consists of 2 alpha, 1 beta, 1 beta' and 1 omega subunit. When a sigma factor is associated with the core the holoenzyme is formed, which can initiate transcription.

The catalysed reaction is RNA(n) + a ribonucleoside 5'-triphosphate = RNA(n+1) + diphosphate. DNA-dependent RNA polymerase catalyzes the transcription of DNA into RNA using the four ribonucleoside triphosphates as substrates. This is DNA-directed RNA polymerase subunit alpha from Rickettsia typhi (strain ATCC VR-144 / Wilmington).